The chain runs to 422 residues: Dihydroorotase (422 aa).

Residues histidine 57 and histidine 59 each contribute to the Zn(2+) site. Substrate contacts are provided by residues 59–61 and asparagine 91; that span reads HLR. Residues aspartate 149, histidine 176, and histidine 229 each contribute to the Zn(2+) site. Asparagine 275 contacts substrate. Aspartate 302 is a Zn(2+) binding site. Residue aspartate 302 is part of the active site. Substrate is bound by residues histidine 306 and 320 to 321; that span reads FG.

It belongs to the metallo-dependent hydrolases superfamily. DHOase family. Class I DHOase subfamily. Requires Zn(2+) as cofactor.

It catalyses the reaction (S)-dihydroorotate + H2O = N-carbamoyl-L-aspartate + H(+). It participates in pyrimidine metabolism; UMP biosynthesis via de novo pathway; (S)-dihydroorotate from bicarbonate: step 3/3. In terms of biological role, catalyzes the reversible cyclization of carbamoyl aspartate to dihydroorotate. This chain is Dihydroorotase, found in Endomicrobium trichonymphae.